The chain runs to 420 residues: Probable serine hydroxymethyltransferase (420 aa).

Residues Leu121 and 125–127 (GHL) each bind (6S)-5,6,7,8-tetrahydrofolate. Lys230 carries the post-translational modification N6-(pyridoxal phosphate)lysine. Residues Glu246 and 354–356 (SPF) contribute to the (6S)-5,6,7,8-tetrahydrofolate site.

It belongs to the SHMT family. Homodimer. Pyridoxal 5'-phosphate is required as a cofactor.

The protein resides in the cytoplasm. The enzyme catalyses (6R)-5,10-methylene-5,6,7,8-tetrahydrofolate + glycine + H2O = (6S)-5,6,7,8-tetrahydrofolate + L-serine. The protein operates within one-carbon metabolism; tetrahydrofolate interconversion. Its function is as follows. Catalyzes the reversible interconversion of serine and glycine with tetrahydrofolate (THF) serving as the one-carbon carrier. This reaction serves as the major source of one-carbon groups required for the biosynthesis of purines, thymidylate, methionine, and other important biomolecules. This Rickettsia bellii (strain RML369-C) protein is Probable serine hydroxymethyltransferase.